The primary structure comprises 501 residues: Probable cytosol aminopeptidase (501 aa).

Residues K268 and D273 each contribute to the Mn(2+) site. Residue K280 is part of the active site. The Mn(2+) site is built by D291, D350, and E352. Residue R354 is part of the active site.

This sequence belongs to the peptidase M17 family. It depends on Mn(2+) as a cofactor.

The protein resides in the cytoplasm. The enzyme catalyses Release of an N-terminal amino acid, Xaa-|-Yaa-, in which Xaa is preferably Leu, but may be other amino acids including Pro although not Arg or Lys, and Yaa may be Pro. Amino acid amides and methyl esters are also readily hydrolyzed, but rates on arylamides are exceedingly low.. It carries out the reaction Release of an N-terminal amino acid, preferentially leucine, but not glutamic or aspartic acids.. Functionally, presumably involved in the processing and regular turnover of intracellular proteins. Catalyzes the removal of unsubstituted N-terminal amino acids from various peptides. The polypeptide is Probable cytosol aminopeptidase (Idiomarina loihiensis (strain ATCC BAA-735 / DSM 15497 / L2-TR)).